We begin with the raw amino-acid sequence, 380 residues long: N-acetylcysteine deacetylase (380 aa).

Ni(2+) is bound by residues cysteine 98, histidine 100, glutamate 134, histidine 158, and histidine 350.

Belongs to the peptidase M20 family. The cofactor is a divalent metal cation.

It carries out the reaction N-acetyl-L-cysteine + H2O = L-cysteine + acetate. Its pathway is amino-acid biosynthesis; L-cysteine biosynthesis. Functionally, probably catalyzes the deacetylation of N-acetylcysteine (NAC) to acetate and cysteine. Is involved in a S-(2-succino)cysteine (2SC) degradation pathway that allows B.subtilis to grow on 2SC as a sole sulfur source, via its metabolization to cysteine. This Bacillus subtilis (strain 168) protein is N-acetylcysteine deacetylase.